A 254-amino-acid chain; its full sequence is Hydroxyacylglutathione hydrolase (254 aa).

Residues H53, H55, D57, H58, H111, D128, and H166 each contribute to the Zn(2+) site.

This sequence belongs to the metallo-beta-lactamase superfamily. Glyoxalase II family. In terms of assembly, monomer. The cofactor is Zn(2+).

It carries out the reaction an S-(2-hydroxyacyl)glutathione + H2O = a 2-hydroxy carboxylate + glutathione + H(+). It functions in the pathway secondary metabolite metabolism; methylglyoxal degradation; (R)-lactate from methylglyoxal: step 2/2. Thiolesterase that catalyzes the hydrolysis of S-D-lactoyl-glutathione to form glutathione and D-lactic acid. The polypeptide is Hydroxyacylglutathione hydrolase (Aeromonas hydrophila subsp. hydrophila (strain ATCC 7966 / DSM 30187 / BCRC 13018 / CCUG 14551 / JCM 1027 / KCTC 2358 / NCIMB 9240 / NCTC 8049)).